A 127-amino-acid chain; its full sequence is Glycine cleavage system H protein (127 aa).

In terms of domain architecture, Lipoyl-binding spans 22-103 (EAYIGITDFA…AFANWIIKVE (82 aa)). An N6-lipoyllysine modification is found at lysine 63.

It belongs to the GcvH family. In terms of assembly, the glycine cleavage system is composed of four proteins: P, T, L and H. It depends on (R)-lipoate as a cofactor.

Functionally, the glycine cleavage system catalyzes the degradation of glycine. The H protein shuttles the methylamine group of glycine from the P protein to the T protein. The chain is Glycine cleavage system H protein from Alkaliphilus oremlandii (strain OhILAs) (Clostridium oremlandii (strain OhILAs)).